The sequence spans 607 residues: Chaperone protein DnaK (607 aa).

Thr173 carries the phosphothreonine; by autocatalysis modification. Residues 577 to 588 (AQAQQGAEGAAS) show a composition bias toward low complexity. A disordered region spans residues 577–607 (AQAQQGAEGAASQDDDVVDADFTEVKDDDNK). Residues 589-598 (QDDDVVDADF) show a composition bias toward acidic residues.

The protein belongs to the heat shock protein 70 family.

Its function is as follows. Acts as a chaperone. In Macrococcus caseolyticus (strain JCSC5402) (Macrococcoides caseolyticum), this protein is Chaperone protein DnaK.